The sequence spans 201 residues: uncharacterized protein (201 aa).

Interacts with the chaperones HSP82 and HSC82.

This is an uncharacterized protein from Saccharomyces cerevisiae (strain ATCC 204508 / S288c) (Baker's yeast).